A 125-amino-acid polypeptide reads, in one-letter code: Linear element protein rec27 (125 aa).

Residues 45–104 (KTNIENEKKAFIKDVSQVQQKIKEFEIQKANQIKQLNEEKLSIEARKQQLEIEIRNQLLQ) are a coiled coil.

Component of linear elements (LinEs), which are similar to synaptonemal complexes, at least composed of rec27, rec25, rec10 and mug20.

It is found in the cytoplasm. The protein resides in the nucleus. The protein localises to the chromosome. Functionally, during meiotic DNA recombination, binds to and activates DNA double-strand break (DSB) hotspot sites. This Schizosaccharomyces pombe (strain 972 / ATCC 24843) (Fission yeast) protein is Linear element protein rec27.